A 241-amino-acid chain; its full sequence is Copper transport protein CTR3 (241 aa).

The Lumenal portion of the chain corresponds to 1-41; that stretch reads MNMGGSSSTAAKKATCKISMLWNWYTIDTCFIARSWRNDTK. A helical transmembrane segment spans residues 42 to 62; that stretch reads GKFAGSCIGCFALVVVAQWLT. The Cytoplasmic portion of the chain corresponds to 63–159; the sequence is RFSRQFDVEL…SCCTLITPVD (97 aa). The helical transmembrane segment at 160 to 180 threads the bilayer; it reads LYPTFLDHMIRVTIFVLQWGL. The Lumenal portion of the chain corresponds to 181–182; it reads SY. A helical transmembrane segment spans residues 183–203; the sequence is IIMLLFMYYNGYIIISCLIGA. At 204–241 the chain is on the cytoplasmic side; the sequence is IVGRFIFCYEPLGSLGANGSAQGTVSYDKESDDRKCCL.

The protein belongs to the copper transporter (Ctr) (TC 1.A.56) family. SLC31A subfamily.

It localises to the cytoplasmic vesicle membrane. In terms of biological role, required for high affinity copper (probably reduced Cu I) transport into the cell. The chain is Copper transport protein CTR3 (CTR3) from Saccharomyces cerevisiae (strain ATCC 204508 / S288c) (Baker's yeast).